Here is a 98-residue protein sequence, read N- to C-terminus: NADH-ubiquinone oxidoreductase chain 4L (98 aa).

The next 3 membrane-spanning stretches (helical) occupy residues 1 to 21, 26 to 46, and 59 to 79; these read MTPTHFTISSAFLLGMMGLAF, LLSALLCLEAMMLALFIALSL, and APMLMLAFSACEASAGLALLV.

Belongs to the complex I subunit 4L family.

Its subcellular location is the mitochondrion membrane. The catalysed reaction is a ubiquinone + NADH + 5 H(+)(in) = a ubiquinol + NAD(+) + 4 H(+)(out). In terms of biological role, core subunit of the mitochondrial membrane respiratory chain NADH dehydrogenase (Complex I) which catalyzes electron transfer from NADH through the respiratory chain, using ubiquinone as an electron acceptor. Part of the enzyme membrane arm which is embedded in the lipid bilayer and involved in proton translocation. The protein is NADH-ubiquinone oxidoreductase chain 4L (MT-ND4L) of Gadus morhua (Atlantic cod).